Here is a 213-residue protein sequence, read N- to C-terminus: MTLNLADLRQRYLKDGLDENNTDDNPFVQFEKWFHQAQKSELLEPNAMVLSTVNEVNQPSTRTVLLKQFSDDGFVFFTNYRSQKAKDIQHNPKVALHFNWLELERQVKIQGVAAKISLKDSMRYFATRPKGSQIGAWVSHQSEVISSKQLLLSQFEKMKQKFQSGEIPFPDFWGGYMVVPQQIEFWQGGDNRLHDRICYTLKDNQWVKQRLAP.

Residues 9 to 12 (RQRY) and K67 each bind substrate. FMN is bound by residues 62–67 (RTVLLK), 77–78 (FT), K84, and Q106. Substrate contacts are provided by Y124, R128, and S132. FMN contacts are provided by residues 141-142 (QS) and W186. 192-194 (RLH) contacts substrate. R196 is an FMN binding site.

Belongs to the pyridoxamine 5'-phosphate oxidase family. In terms of assembly, homodimer. Requires FMN as cofactor.

The enzyme catalyses pyridoxamine 5'-phosphate + O2 + H2O = pyridoxal 5'-phosphate + H2O2 + NH4(+). It catalyses the reaction pyridoxine 5'-phosphate + O2 = pyridoxal 5'-phosphate + H2O2. It participates in cofactor metabolism; pyridoxal 5'-phosphate salvage; pyridoxal 5'-phosphate from pyridoxamine 5'-phosphate: step 1/1. Its pathway is cofactor metabolism; pyridoxal 5'-phosphate salvage; pyridoxal 5'-phosphate from pyridoxine 5'-phosphate: step 1/1. Its function is as follows. Catalyzes the oxidation of either pyridoxine 5'-phosphate (PNP) or pyridoxamine 5'-phosphate (PMP) into pyridoxal 5'-phosphate (PLP). This is Pyridoxine/pyridoxamine 5'-phosphate oxidase 2 from Hydrogenovibrio crunogenus (strain DSM 25203 / XCL-2) (Thiomicrospira crunogena).